The primary structure comprises 201 residues: Esterase TesA (201 aa).

The signal sequence occupies residues 1-21 (MRALLLSGCLALVLLTQQAAA). The Nucleophile role is filled by Ser30. Residues Asp177 and His180 contribute to the active site.

It belongs to the 'GDSL' lipolytic enzyme family.

It is found in the secreted. It catalyses the reaction a carboxylic ester + H2O = an alcohol + a carboxylate + H(+). Esterase that exhibits the highest activity towards Tween detergents and p-nitrophenyl esters of short acyl chain length. Also displays a low thioesterase activity towards palmitoyl-coenzyme A, but is not active towards acetyl-coenzyme A. In Pseudomonas aeruginosa (strain ATCC 15692 / DSM 22644 / CIP 104116 / JCM 14847 / LMG 12228 / 1C / PRS 101 / PAO1), this protein is Esterase TesA (tesA).